A 456-amino-acid polypeptide reads, in one-letter code: MALCKAEVKKVADELGRPLTFNVQTFGCQMNAKDSEKLAGILETIGYVESDSEEADFVVYNTCTVRENANTRVYGRIGFLGNLKKKNPHMRIALCGCMMQESHVVEKIKKSYRFVDIVFGTHNIFKLAELIYARHTTKKMVIDIWKETDKIVEELPSEQKYKFKAGVNIMYGCNNFCSYCIVPYVRGRERSRNPEDIIKEIKQLVSKGVVEVMLLGQNVNSYGKTLDEPVSFAQLLQMVEQVEGLKRIRFMTPHPKDLSNDVIEVMKNSKKICNHIHLPVQSGSTELLMKMNRKYTKEDYLNLVDRIKMAMPNISLTTDIIVGFPGETEEDFLDTLDVVRKVGYDSAYTFIYSKRSGTPAATMENQIPEEVANERFQRLLTTIRESSSKISKDDEGKIAEVLVEEVNEQDNSLMTGRLSNNVLVHFKGTKELIGNIVSVKLSECKGFYYMGEMMED.

Residues 19–136 (LTFNVQTFGC…LAELIYARHT (118 aa)) enclose the MTTase N-terminal domain. [4Fe-4S] cluster is bound by residues Cys-28, Cys-63, Cys-97, Cys-173, Cys-177, and Cys-180. Residues 159 to 389 (QKYKFKAGVN…LTTIRESSSK (231 aa)) form the Radical SAM core domain. The 64-residue stretch at 392-455 (KDDEGKIAEV…GFYYMGEMME (64 aa)) folds into the TRAM domain.

The protein belongs to the methylthiotransferase family. MiaB subfamily. Monomer. The cofactor is [4Fe-4S] cluster.

It localises to the cytoplasm. It carries out the reaction N(6)-dimethylallyladenosine(37) in tRNA + (sulfur carrier)-SH + AH2 + 2 S-adenosyl-L-methionine = 2-methylsulfanyl-N(6)-dimethylallyladenosine(37) in tRNA + (sulfur carrier)-H + 5'-deoxyadenosine + L-methionine + A + S-adenosyl-L-homocysteine + 2 H(+). Functionally, catalyzes the methylthiolation of N6-(dimethylallyl)adenosine (i(6)A), leading to the formation of 2-methylthio-N6-(dimethylallyl)adenosine (ms(2)i(6)A) at position 37 in tRNAs that read codons beginning with uridine. This chain is tRNA-2-methylthio-N(6)-dimethylallyladenosine synthase, found in Lachnoclostridium phytofermentans (strain ATCC 700394 / DSM 18823 / ISDg) (Clostridium phytofermentans).